A 118-amino-acid chain; its full sequence is RxLR effector protein PITG_19617 (118 aa).

Residues 1–21 form the signal peptide; the sequence is MRAVYILAMACAATLQASSSA. The short motif at 50–64 is the RxLR-dEER element; the sequence is RLLRVEDKEEETEEE.

Belongs to the RxLR effector family.

Its subcellular location is the secreted. The protein localises to the host nucleus. It localises to the host cytoplasm. Effector that enhances P.infestans colonization of Nicotiana benthamiana leaves. The sequence is that of RxLR effector protein PITG_19617 from Phytophthora infestans (strain T30-4) (Potato late blight agent).